The sequence spans 223 residues: MKRTKQINHASFRKSWSARHLTPVALAVSAVFMLAACEQADETVSMYQNADDCSAANPGKSEQCTTAFNSAKEEAAKTAPKYASRADCVAEFGEGQCQQAPAQAGVGNTNAESQSSGSFWMPLMAGYMMGRLMGGGMGGQQQPLFSSKSPTSPANGKFVDASGKNYGAATPGRTMTVPKSALAPKPATTSTVTRGGFGESVAKQNTMQRNSSSTGSANRSMGG.

The segment at 166-223 (YGAATPGRTMTVPKSALAPKPATTSTVTRGGFGESVAKQNTMQRNSSSTGSANRSMGG) is disordered. Residues 202 to 223 (AKQNTMQRNSSSTGSANRSMGG) are compositionally biased toward polar residues.

This sequence belongs to the UPF0441 family.

The sequence is that of UPF0441 protein ETA_04310 from Erwinia tasmaniensis (strain DSM 17950 / CFBP 7177 / CIP 109463 / NCPPB 4357 / Et1/99).